We begin with the raw amino-acid sequence, 102 residues long: Small ribosomal subunit protein uS10 (102 aa).

This sequence belongs to the universal ribosomal protein uS10 family. Part of the 30S ribosomal subunit.

Its function is as follows. Involved in the binding of tRNA to the ribosomes. In Staphylococcus haemolyticus (strain JCSC1435), this protein is Small ribosomal subunit protein uS10.